The chain runs to 441 residues: MEISSHQSHLLQQLNEQRRQDVFCDCSILVEGKVFKAHRNVLFASSGYFKMLLSQNSKETSQPTTATFQAFSPDTFTVILDFVYSGKLSLTGQNVIEVMSAASFLQMTDVISVCKTFIKSSLDISEKEKDRYFSLSDKDANSNGIERSSFYSSGWQDESSSPRSHLSPDQGTGIISGKSWSKYNYHPASQRNTQQPLTKHEQRKDSIKKAKHLRLSQPSEMTHYKSSKREARTSDSSSHASQSEEQAQMNAEMDSTPVSYQYGQGSDVTSRSFPDDLPRMRFKCPYCTHVVKRKADLKRHLRCHTGERPYPCQACGKRFSRLDHLSSHFRTIHQACKLICRKCKRHVTGLTGQVVQEGTRRYRLCNECLAEVGIDSLPIDLEAEQHLMSPSDGDKDSRWHMGEDENRSYVEIVEDGSADLVIQQVDDSEEEEEKEIKPNIR.

In terms of domain architecture, BTB spans 24-92 (CDCSILVEGK…VYSGKLSLTG (69 aa)). Polar residues-rich tracts occupy residues 146–170 (ERSS…SPDQ) and 178–197 (KSWS…QQPL). A disordered region spans residues 146–252 (ERSSFYSSGW…SEEQAQMNAE (107 aa)). 2 positions are modified to phosphoserine: Ser161 and Ser167. Residues Lys178, Lys182, and Lys199 each participate in a glycyl lysine isopeptide (Lys-Gly) (interchain with G-Cter in SUMO2) cross-link. A compositionally biased stretch (basic and acidic residues) spans 198–208 (TKHEQRKDSIK). Residues 234–248 (SDSSSHASQSEEQAQ) are compositionally biased toward low complexity. C2H2-type zinc fingers lie at residues 282–304 (FKCP…LRCH) and 310–333 (YPCQ…RTIH). Lys437 is covalently cross-linked (Glycyl lysine isopeptide (Lys-Gly) (interchain with G-Cter in SUMO2)).

The protein localises to the nucleus. In terms of biological role, may be involved in transcriptional regulation. This Bos taurus (Bovine) protein is Zinc finger and BTB domain-containing protein 8A (ZBTB8A).